We begin with the raw amino-acid sequence, 530 residues long: Chaperone Ric-8A (530 aa).

S435 carries the phosphoserine modification. Phosphothreonine is present on residues T440 and T442. S501, S522, S523, and S527 each carry phosphoserine.

Belongs to the synembryn family. In terms of assembly, interacts with GDP-bound G alpha proteins GNAI1, GNAO1 and GNAQ, and with GNA13 with lower affinity. Does not interact with G-alpha proteins when they are in complex with subunits beta and gamma. Interacts (via C-terminus) with RGS14; the interaction stimulates the dissociation of the complex between RGS14 and the active GTP-bound form of GNAI1. Interacts with NCS1; interaction is favored in the absence of Ca(2+) and myristoylation of NCS1 is not required. In terms of processing, phosphorylated at Ser-435 and Thr-440 by CK2, stabilizing its interface with G alpha proteins.

It localises to the cytoplasm. The protein localises to the cell cortex. In terms of biological role, chaperone that specifically binds and folds nascent G alpha proteins prior to G protein heterotrimer formation, promoting their stability and activity: folds GNAI1, GNAO1, GNA13 and GNAQ. Does not fold G(s) G-alpha proteins GNAS nor GNAL. Also acts as a guanine nucleotide exchange factor (GEF) for G alpha proteins by stimulating exchange of bound GDP for free GTP. Involved in regulation of microtubule pulling forces during mitotic movement of chromosomes by stimulating G(i)-alpha protein (GNAI1), possibly leading to release G(i)-alpha-GTP and NuMA proteins from the NuMA-GPSM2-G(i)-alpha-GDP complex. Also acts as an activator for G(q)-alpha (GNAQ) protein by enhancing the G(q)-coupled receptor-mediated ERK activation. This is Chaperone Ric-8A (RIC8A) from Bos taurus (Bovine).